Consider the following 105-residue polypeptide: Large ribosomal subunit protein bL21 (105 aa).

This sequence belongs to the bacterial ribosomal protein bL21 family. As to quaternary structure, part of the 50S ribosomal subunit. Contacts protein L20.

In terms of biological role, this protein binds to 23S rRNA in the presence of protein L20. This chain is Large ribosomal subunit protein bL21, found in Parafrankia sp. (strain EAN1pec).